The chain runs to 153 residues: Interleukin-4 (153 aa).

A signal peptide spans 1 to 24 (MGLTSQLLPPLFFLLACAGNFAHG). 3 disulfide bridges follow: cysteine 27/cysteine 151, cysteine 48/cysteine 89, and cysteine 70/cysteine 123. An N-linked (GlcNAc...) asparagine glycan is attached at asparagine 62. N-linked (GlcNAc...) asparagine glycosylation occurs at asparagine 129.

This sequence belongs to the IL-4/IL-13 family.

It localises to the secreted. Participates in at least several B-cell activation processes as well as of other cell types. It is a costimulator of DNA-synthesis. It induces the expression of class II MHC molecules on resting B-cells. It enhances both secretion and cell surface expression of IgE and IgG1. It also regulates the expression of the low affinity Fc receptor for IgE (CD23) on both lymphocytes and monocytes. Positively regulates IL31RA expression in macrophages. Stimulates autophagy in dendritic cells by interfering with mTORC1 signaling and through the induction of RUFY4. The chain is Interleukin-4 (IL4) from Macaca mulatta (Rhesus macaque).